We begin with the raw amino-acid sequence, 491 residues long: NADH-quinone oxidoreductase subunit N (491 aa).

The next 14 membrane-spanning stretches (helical) occupy residues 6–26, 37–57, 69–89, 103–123, 128–148, 163–183, 206–226, 238–258, 273–293, 301–321, 335–355, 379–399, 413–433, and 458–478; these read TLAP…INWI, VAYP…GMNA, LVVI…GLFV, MFAG…IVMI, FLTL…LVAL, FVLG…MYGA, LAFG…AAPF, PTAV…ALFI, QMML…TAIV, LAYS…SGVV, AMFY…IILL, FAFL…TVGF, GMTW…FYYL, and SMLS…AALM.

It belongs to the complex I subunit 2 family. In terms of assembly, NDH-1 is composed of 14 different subunits. Subunits NuoA, H, J, K, L, M, N constitute the membrane sector of the complex.

It is found in the cell inner membrane. The catalysed reaction is a quinone + NADH + 5 H(+)(in) = a quinol + NAD(+) + 4 H(+)(out). NDH-1 shuttles electrons from NADH, via FMN and iron-sulfur (Fe-S) centers, to quinones in the respiratory chain. The immediate electron acceptor for the enzyme in this species is believed to be ubiquinone. Couples the redox reaction to proton translocation (for every two electrons transferred, four hydrogen ions are translocated across the cytoplasmic membrane), and thus conserves the redox energy in a proton gradient. This chain is NADH-quinone oxidoreductase subunit N, found in Cupriavidus taiwanensis (strain DSM 17343 / BCRC 17206 / CCUG 44338 / CIP 107171 / LMG 19424 / R1) (Ralstonia taiwanensis (strain LMG 19424)).